The following is a 345-amino-acid chain: S-adenosylmethionine:tRNA ribosyltransferase-isomerase (345 aa).

The protein belongs to the QueA family. In terms of assembly, monomer.

The protein localises to the cytoplasm. The enzyme catalyses 7-aminomethyl-7-carbaguanosine(34) in tRNA + S-adenosyl-L-methionine = epoxyqueuosine(34) in tRNA + adenine + L-methionine + 2 H(+). It functions in the pathway tRNA modification; tRNA-queuosine biosynthesis. Its function is as follows. Transfers and isomerizes the ribose moiety from AdoMet to the 7-aminomethyl group of 7-deazaguanine (preQ1-tRNA) to give epoxyqueuosine (oQ-tRNA). This chain is S-adenosylmethionine:tRNA ribosyltransferase-isomerase, found in Rhodospirillum rubrum (strain ATCC 11170 / ATH 1.1.1 / DSM 467 / LMG 4362 / NCIMB 8255 / S1).